We begin with the raw amino-acid sequence, 96 residues long: Large ribosomal subunit protein bL28 (96 aa).

The protein belongs to the bacterial ribosomal protein bL28 family.

This is Large ribosomal subunit protein bL28 from Methylobacterium sp. (strain 4-46).